Reading from the N-terminus, the 146-residue chain is Myoglobin (146 aa).

In terms of domain architecture, Globin spans 2-140; sequence ADLDAVLKCW…VIADLEANYK (139 aa). His59 lines the nitrite pocket. His59 serves as a coordination point for O2. His88 lines the heme b pocket.

Belongs to the globin family. As to quaternary structure, monomeric.

Its subcellular location is the cytoplasm. It is found in the sarcoplasm. It carries out the reaction Fe(III)-heme b-[protein] + nitric oxide + H2O = Fe(II)-heme b-[protein] + nitrite + 2 H(+). The enzyme catalyses H2O2 + AH2 = A + 2 H2O. In terms of biological role, monomeric heme protein which primary function is to store oxygen and facilitate its diffusion within muscle tissues. Reversibly binds oxygen through a pentacoordinated heme iron and enables its timely and efficient release as needed during periods of heightened demand. Depending on the oxidative conditions of tissues and cells, and in addition to its ability to bind oxygen, it also has a nitrite reductase activity whereby it regulates the production of bioactive nitric oxide. Under stress conditions, like hypoxia and anoxia, it also protects cells against reactive oxygen species thanks to its pseudoperoxidase activity. The chain is Myoglobin (mb) from Katsuwonus pelamis (Skipjack tuna).